The chain runs to 257 residues: UPF0246 protein Ent638_0568 (257 aa).

The protein belongs to the UPF0246 family.

This Enterobacter sp. (strain 638) protein is UPF0246 protein Ent638_0568.